Consider the following 310-residue polypeptide: Calcium homeostasis modulator protein 5 (310 aa).

The next 4 helical transmembrane spans lie at 17-37 (TIGY…FSMV), 49-69 (FPYG…VGFF), 101-121 (LIKV…VALL), and 181-201 (QILG…GTCY).

Belongs to the CALHM family.

The protein resides in the membrane. Its function is as follows. Pore-forming subunit of a voltage-gated ion channel. The polypeptide is Calcium homeostasis modulator protein 5 (calhm5.1) (Danio rerio (Zebrafish)).